Consider the following 456-residue polypeptide: Probable hexose phosphate transport protein (456 aa).

11 consecutive transmembrane segments (helical) span residues 34-54, 70-90, 113-133, 161-181, 185-205, 257-277, 302-322, 331-351, 363-383, 394-414, and 421-441; these read IFYSMFLGYVFFYFTRKSFTF, LGIIGSTLYITYGISKFVSGV, IFFGLSSTIPLFVLFWGINGW, VWSTSHNIGGALIPVLTGVAI, GWRGAMFIPGIICIIMGFILI, YVLSNKWLWFLSFASFFIYVV, LCVSLFEIGGLFGMLLAGWLS, GPMNVVFSLGLLVSILGLWGT, FLFIIGFFLFGPQMMIGLAAA, ASGFTGWFAYFGAAFAGYPLG, and GWHGFFVALLACALIALILFL.

Belongs to the major facilitator superfamily. Organophosphate:Pi antiporter (OPA) (TC 2.A.1.4) family.

The protein resides in the cell membrane. Transport protein for sugar phosphate uptake. The polypeptide is Probable hexose phosphate transport protein (Chlamydia trachomatis serovar D (strain ATCC VR-885 / DSM 19411 / UW-3/Cx)).